The chain runs to 765 residues: Phosphoribosylformylglycinamidine synthase subunit PurL (765 aa).

His-59 is an active-site residue. ATP-binding residues include Tyr-62 and Lys-104. Glu-106 is a Mg(2+) binding site. Substrate is bound by residues 107-110 and Arg-129; that span reads SHNH. His-108 (proton acceptor) is an active-site residue. Asp-130 provides a ligand contact to Mg(2+). Substrate is bound at residue Gln-254. Asp-282 is a Mg(2+) binding site. 326–328 serves as a coordination point for substrate; sequence ESQ. ATP is bound by residues Asn-522 and Gly-559. Asn-560 is a Mg(2+) binding site. Ser-562 contacts substrate.

The protein belongs to the FGAMS family. Monomer. Part of the FGAM synthase complex composed of 1 PurL, 1 PurQ and 2 PurS subunits.

It localises to the cytoplasm. It carries out the reaction N(2)-formyl-N(1)-(5-phospho-beta-D-ribosyl)glycinamide + L-glutamine + ATP + H2O = 2-formamido-N(1)-(5-O-phospho-beta-D-ribosyl)acetamidine + L-glutamate + ADP + phosphate + H(+). The protein operates within purine metabolism; IMP biosynthesis via de novo pathway; 5-amino-1-(5-phospho-D-ribosyl)imidazole from N(2)-formyl-N(1)-(5-phospho-D-ribosyl)glycinamide: step 1/2. Functionally, part of the phosphoribosylformylglycinamidine synthase complex involved in the purines biosynthetic pathway. Catalyzes the ATP-dependent conversion of formylglycinamide ribonucleotide (FGAR) and glutamine to yield formylglycinamidine ribonucleotide (FGAM) and glutamate. The FGAM synthase complex is composed of three subunits. PurQ produces an ammonia molecule by converting glutamine to glutamate. PurL transfers the ammonia molecule to FGAR to form FGAM in an ATP-dependent manner. PurS interacts with PurQ and PurL and is thought to assist in the transfer of the ammonia molecule from PurQ to PurL. This chain is Phosphoribosylformylglycinamidine synthase subunit PurL, found in Thermobifida fusca (strain YX).